The chain runs to 360 residues: Protein Wnt-2 (360 aa).

The N-terminal stretch at 1–25 (MNACLVGIWLWLPLLFTWLSPEVSS) is a signal peptide. Cystine bridges form between Cys76–Cys87, Cys127–Cys135, Cys137–Cys157, Cys206–Cys220, Cys208–Cys215, Cys278–Cys309, Cys294–Cys304, Cys308–Cys348, Cys324–Cys339, Cys326–Cys336, and Cys331–Cys332. The O-palmitoleoyl serine; by PORCN moiety is linked to residue Ser212. Asn295 carries N-linked (GlcNAc...) asparagine glycosylation.

It belongs to the Wnt family. Post-translationally, palmitoleoylation is required for efficient binding to frizzled receptors. Depalmitoleoylation leads to Wnt signaling pathway inhibition.

The protein localises to the secreted. It localises to the extracellular space. Its subcellular location is the extracellular matrix. Ligand for members of the frizzled family of seven transmembrane receptors. Probable developmental protein. May be a signaling molecule which affects the development of discrete regions of tissues. Is likely to signal over only few cell diameters. The chain is Protein Wnt-2 (WNT2) from Muntiacus muntjak (Barking deer).